The primary structure comprises 501 residues: Tegument protein US24 (501 aa).

It belongs to the herpesviridae US22 family.

Its subcellular location is the virion tegument. The protein is Tegument protein US24 (US24) of Human cytomegalovirus (strain Merlin) (HHV-5).